Here is a 147-residue protein sequence, read N- to C-terminus: MASHRLLLLCLAGLVFVSEAGPTGTGESKCPLMVKVLDAVRGSPAINVAVHVFKKAADETWEPFASGKTSESGELHGLTTEEEFVEGIYKVEIDTKSYWKALGISPFHEHAEVVFTANDSGPRRYTIAALLSPYSYSTTAVVTIPKE.

The first 20 residues, 1 to 20 (MASHRLLLLCLAGLVFVSEA), serve as a signal peptide directing secretion. Cys-30 bears the Sulfocysteine mark. Lys-35 is a binding site for L-thyroxine. Glu-62 carries the post-translational modification 4-carboxyglutamate. At Ser-72 the chain carries Phosphoserine. Glu-74 provides a ligand contact to L-thyroxine. N-linked (GlcNAc...) asparagine glycosylation occurs at Asn-118. Ser-137 is a binding site for L-thyroxine.

The protein belongs to the transthyretin family. Homotetramer. Dimer of dimers. In the homotetramer, subunits assemble around a central channel that can accommodate two ligand molecules. Interacts with RBP4. Post-translationally, sulfonation of the reactive cysteine Cys-30 enhances the stability of the native conformation of TTR, avoiding misassembly of the protein leading to amyloid formation. In terms of tissue distribution, detected in brain.

It is found in the secreted. Functionally, thyroid hormone-binding protein. Probably transports thyroxine from the bloodstream to the brain. The chain is Transthyretin (TTR) from Pan troglodytes (Chimpanzee).